A 261-amino-acid chain; its full sequence is Ribosomal RNA small subunit methyltransferase J (261 aa).

S-adenosyl-L-methionine is bound by residues 129–130 and Asp182; that span reads ER.

The protein belongs to the methyltransferase superfamily. RsmJ family.

The protein resides in the cytoplasm. The enzyme catalyses guanosine(1516) in 16S rRNA + S-adenosyl-L-methionine = N(2)-methylguanosine(1516) in 16S rRNA + S-adenosyl-L-homocysteine + H(+). Functionally, specifically methylates the guanosine in position 1516 of 16S rRNA. This chain is Ribosomal RNA small subunit methyltransferase J, found in Desulfotalea psychrophila (strain LSv54 / DSM 12343).